Reading from the N-terminus, the 131-residue chain is uncharacterized protein (131 aa).

Residues 17–39 traverse the membrane as a helical segment; the sequence is VILLILILLPVVFLHIMLATWGL.

The protein localises to the membrane. This is an uncharacterized protein from Archaeoglobus fulgidus (strain ATCC 49558 / DSM 4304 / JCM 9628 / NBRC 100126 / VC-16).